The chain runs to 186 residues: Protein C (186 aa).

Residues 1–15 (MSKTDWNASGLSRPS) are compositionally biased toward polar residues. Residues 1–44 (MSKTDWNASGLSRPSPSAHWPSRKLWQHGQKYQTTQDRSEPPAG) are disordered.

The protein belongs to the morbillivirus protein C family. Interacts with the phosphoprotein (via C-terminus); this interaction allows C to associate with the ribonucleocapsid.

The protein localises to the host nucleus. It localises to the host cytoplasmic vesicle. In terms of biological role, ribonucleocapsid-associated protein that interacts with the phosphoprotein (P), thereby increasing replication accuracy and processivity of the polymerase complex. The chain is Protein C (P/V/C) from Homo sapiens (Human).